The chain runs to 113 residues: Ribulose bisphosphate carboxylase small subunit (113 aa).

The protein belongs to the RuBisCO small chain family. Heterohexadecamer of 8 large and 8 small subunits.

The protein localises to the carboxysome. Its function is as follows. RuBisCO catalyzes two reactions: the carboxylation of D-ribulose 1,5-bisphosphate, the primary event in carbon dioxide fixation, as well as the oxidative fragmentation of the pentose substrate in the photorespiration process. Both reactions occur simultaneously and in competition at the same active site. Although the small subunit is not catalytic it is essential for maximal activity. This is Ribulose bisphosphate carboxylase small subunit from Synechococcus sp. (strain WH7803).